A 339-amino-acid chain; its full sequence is Glycerol-3-phosphate dehydrogenase [NAD(P)+] (339 aa).

NADPH is bound by residues Ser-31, Trp-32, Arg-52, and Lys-122. Positions 122 and 152 each coordinate sn-glycerol 3-phosphate. Ala-156 is a binding site for NADPH. 5 residues coordinate sn-glycerol 3-phosphate: Lys-207, Asp-260, Ser-270, Arg-271, and Asn-272. Lys-207 serves as the catalytic Proton acceptor. Arg-271 is a binding site for NADPH. Glu-293 is an NADPH binding site.

It belongs to the NAD-dependent glycerol-3-phosphate dehydrogenase family.

It localises to the cytoplasm. The enzyme catalyses sn-glycerol 3-phosphate + NAD(+) = dihydroxyacetone phosphate + NADH + H(+). It catalyses the reaction sn-glycerol 3-phosphate + NADP(+) = dihydroxyacetone phosphate + NADPH + H(+). It participates in membrane lipid metabolism; glycerophospholipid metabolism. Functionally, catalyzes the reduction of the glycolytic intermediate dihydroxyacetone phosphate (DHAP) to sn-glycerol 3-phosphate (G3P), the key precursor for phospholipid synthesis. This chain is Glycerol-3-phosphate dehydrogenase [NAD(P)+], found in Tropheryma whipplei (strain Twist) (Whipple's bacillus).